Consider the following 55-residue polypeptide: Large ribosomal subunit protein bL33 (55 aa).

It belongs to the bacterial ribosomal protein bL33 family.

In Proteus mirabilis (strain HI4320), this protein is Large ribosomal subunit protein bL33.